Consider the following 135-residue polypeptide: Small ribosomal subunit protein uS12 (135 aa).

Residues 1–20 are disordered; sequence MPTINQLVRKGRHSKVTKSK. Positions 9–18 are enriched in basic residues; that stretch reads RKGRHSKVTK.

This sequence belongs to the universal ribosomal protein uS12 family. Part of the 30S ribosomal subunit. Contacts proteins S8 and S17. May interact with IF1 in the 30S initiation complex.

With S4 and S5 plays an important role in translational accuracy. Its function is as follows. Interacts with and stabilizes bases of the 16S rRNA that are involved in tRNA selection in the A site and with the mRNA backbone. Located at the interface of the 30S and 50S subunits, it traverses the body of the 30S subunit contacting proteins on the other side and probably holding the rRNA structure together. The combined cluster of proteins S8, S12 and S17 appears to hold together the shoulder and platform of the 30S subunit. This is Small ribosomal subunit protein uS12 from Lactobacillus acidophilus (strain ATCC 700396 / NCK56 / N2 / NCFM).